A 366-amino-acid chain; its full sequence is MSQSVLRLVDKDTMDKQKALEAAVGQIERAFGKGSIMKLGQRGSVVDIESISTGSLGLDIALGIGGLPRGRIVEIYGPESSGKTTLALHVVAEAQKKGGQCAFVDAEHAFDPLYARKLGVSLDDLLVSQPDTGEQALEIADTLVRSGAIDVLVIDSVAALVPKAELEGDMGDSHVGLQARLMSQALRKLTGTVSRSNTLIIFINQIRMKIGVMFGNPETTTGGNALKFYASVRLDIRRIGAVKDKEEVVGNQTRVKVVKNKVAPPFKVVEFDIMYGEGISKLGEMLDLGVKANIIEKSGAWFSYNSTRIGQGRENAKQFLRDNPAMAEEIENAVRANAGLIAEEMIGGPGGEDDDAGGAAGVGDEA.

G77–T84 is an ATP binding site. The interval I346 to A366 is disordered.

It belongs to the RecA family.

It is found in the cytoplasm. Its function is as follows. Can catalyze the hydrolysis of ATP in the presence of single-stranded DNA, the ATP-dependent uptake of single-stranded DNA by duplex DNA, and the ATP-dependent hybridization of homologous single-stranded DNAs. It interacts with LexA causing its activation and leading to its autocatalytic cleavage. This Rhodospirillum rubrum (strain ATCC 11170 / ATH 1.1.1 / DSM 467 / LMG 4362 / NCIMB 8255 / S1) protein is Protein RecA.